The chain runs to 493 residues: Inosine-5'-monophosphate dehydrogenase (493 aa).

CBS domains are found at residues 97–155 and 159–219; these read VIID…NAPI and MTSE…AKDE. NAD(+) contacts are provided by residues Asp253 and 303 to 305; that span reads GIG. K(+) is bound by residues Gly305 and Gly307. Ser308 contributes to the IMP binding site. Position 310 (Cys310) interacts with K(+). The Thioimidate intermediate role is filled by Cys310. Residues 343–345, 366–367, and 390–394 contribute to the IMP site; these read DGG, GS, and YRGMG. The Proton acceptor role is filled by Arg406. Glu421 contributes to the IMP binding site. The K(+) site is built by Glu475, Ser476, and His477.

The protein belongs to the IMPDH/GMPR family. Homotetramer. K(+) is required as a cofactor.

It carries out the reaction IMP + NAD(+) + H2O = XMP + NADH + H(+). It functions in the pathway purine metabolism; XMP biosynthesis via de novo pathway; XMP from IMP: step 1/1. With respect to regulation, mycophenolic acid (MPA) is a non-competitive inhibitor that prevents formation of the closed enzyme conformation by binding to the same site as the amobile flap. In contrast, mizoribine monophosphate (MZP) is a competitive inhibitor that induces the closed conformation. MPA is a potent inhibitor of mammalian IMPDHs but a poor inhibitor of the bacterial enzymes. MZP is a more potent inhibitor of bacterial IMPDH. Its function is as follows. Catalyzes the conversion of inosine 5'-phosphate (IMP) to xanthosine 5'-phosphate (XMP), the first committed and rate-limiting step in the de novo synthesis of guanine nucleotides, and therefore plays an important role in the regulation of cell growth. The polypeptide is Inosine-5'-monophosphate dehydrogenase (Streptococcus pyogenes serotype M1).